Consider the following 199-residue polypeptide: Regulator of G-protein signaling 16 (199 aa).

S-palmitoyl cysteine attachment occurs at residues Cys-2 and Cys-12. Residues 64–180 (SFQSLLNSKN…LKSPAYRDLA (117 aa)) form the RGS domain. 2 positions are modified to phosphotyrosine: Tyr-167 and Tyr-176.

Interacts with GNAI1 and GNAQ. Interacts with GNAI3, GNAI3 and GNAO1. In terms of processing, palmitoylated on Cys-2 and/or Cys-12. Phosphorylated. Phosphorylation at Tyr-167 by EGFR enhances GTPase accelerating (GAP) activity toward GNAI1. As to expression, predominantly found in the retina. Some expression has been found in the liver.

It localises to the membrane. In terms of biological role, regulates G protein-coupled receptor signaling cascades. Inhibits signal transduction by increasing the GTPase activity of G protein alpha subunits, thereby driving them into their inactive GDP-bound form. Plays an important role in the phototransduction cascade by regulating the lifetime and effective concentration of activated transducin alpha. May regulate extra and intracellular mitogenic signals. In Rattus norvegicus (Rat), this protein is Regulator of G-protein signaling 16 (Rgs16).